The primary structure comprises 484 residues: Acetyl-coenzyme A carboxylase carboxyl transferase subunit beta, chloroplastic (484 aa).

The 262-residue stretch at 223-484 folds into the CoA carboxyltransferase N-terminal domain; sequence LWIQCDNCYG…LHAFFPLNKN (262 aa). Cys-227, Cys-230, Cys-243, and Cys-246 together coordinate Zn(2+). A C4-type zinc finger spans residues 227–246; it reads CDNCYGLMYKKVKMNVCEQC.

This sequence belongs to the AccD/PCCB family. In terms of assembly, acetyl-CoA carboxylase is a heterohexamer composed of biotin carboxyl carrier protein, biotin carboxylase and 2 subunits each of ACCase subunit alpha and ACCase plastid-coded subunit beta (accD). Zn(2+) is required as a cofactor.

It localises to the plastid. Its subcellular location is the chloroplast stroma. It carries out the reaction N(6)-carboxybiotinyl-L-lysyl-[protein] + acetyl-CoA = N(6)-biotinyl-L-lysyl-[protein] + malonyl-CoA. The protein operates within lipid metabolism; malonyl-CoA biosynthesis; malonyl-CoA from acetyl-CoA: step 1/1. Its function is as follows. Component of the acetyl coenzyme A carboxylase (ACC) complex. Biotin carboxylase (BC) catalyzes the carboxylation of biotin on its carrier protein (BCCP) and then the CO(2) group is transferred by the transcarboxylase to acetyl-CoA to form malonyl-CoA. The chain is Acetyl-coenzyme A carboxylase carboxyl transferase subunit beta, chloroplastic from Olimarabidopsis pumila (Dwarf rocket).